Consider the following 449-residue polypeptide: Phosphoglucosamine mutase (449 aa).

Serine 100 serves as the catalytic Phosphoserine intermediate. Residues serine 100, aspartate 240, aspartate 242, and aspartate 244 each contribute to the Mg(2+) site. At serine 100 the chain carries Phosphoserine.

This sequence belongs to the phosphohexose mutase family. The cofactor is Mg(2+). In terms of processing, activated by phosphorylation.

The catalysed reaction is alpha-D-glucosamine 1-phosphate = D-glucosamine 6-phosphate. Its function is as follows. Catalyzes the conversion of glucosamine-6-phosphate to glucosamine-1-phosphate. This Clostridium novyi (strain NT) protein is Phosphoglucosamine mutase.